The chain runs to 729 residues: Catalase-peroxidase (729 aa).

Positions 95 to 218 (WHSAGTYRGA…LAAVEMGLVY (124 aa)) form a cross-link, tryptophyl-tyrosyl-methioninium (Trp-Tyr) (with M-244). The Proton acceptor role is filled by H96. Positions 218-244 (YVNPEGPHGHPDPVASGPDVRDTFARM) form a cross-link, tryptophyl-tyrosyl-methioninium (Tyr-Met) (with W-95). H259 contributes to the heme b binding site.

It belongs to the peroxidase family. Peroxidase/catalase subfamily. As to quaternary structure, homodimer or homotetramer. Heme b serves as cofactor. In terms of processing, formation of the three residue Trp-Tyr-Met cross-link is important for the catalase, but not the peroxidase activity of the enzyme.

The enzyme catalyses H2O2 + AH2 = A + 2 H2O. It catalyses the reaction 2 H2O2 = O2 + 2 H2O. Bifunctional enzyme with both catalase and broad-spectrum peroxidase activity. The protein is Catalase-peroxidase of Synechococcus sp. (strain CC9605).